Here is a 344-residue protein sequence, read N- to C-terminus: Follistatin (344 aa).

A signal peptide spans 1-29 (MVCARHQPGGLCLLLLLLCQFMEDRSAQA). One can recognise a TB domain in the interval 30–103 (GNCWLRQAKN…TCENVDCGPG (74 aa)). 18 disulfides stabilise this stretch: Cys-32-Cys-55, Cys-42-Cys-88, Cys-56-Cys-91, Cys-95-Cys-106, Cys-100-Cys-116, Cys-118-Cys-150, Cys-122-Cys-143, Cys-132-Cys-164, Cys-168-Cys-179, Cys-173-Cys-189, Cys-192-Cys-225, Cys-196-Cys-218, Cys-207-Cys-239, Cys-245-Cys-256, Cys-250-Cys-267, Cys-270-Cys-302, Cys-274-Cys-295, and Cys-284-Cys-316. The Follistatin-like 1 domain occupies 94–117 (TCENVDCGPGKKCRMNKKNKPRCV). Residues 112–166 (NKPRCVCAPDCSNITWKGPVCGLDGKTYRNECALLKARCKEQPELEVQYQGKCKK) form the Kazal-like 1 domain. An N-linked (GlcNAc...) asparagine glycan is attached at Asn-124. The Follistatin-like 2 domain occupies 167–190 (TCRDVFCPGSSTCVVDQTNNAYCV). Residues 186–241 (NAYCVTCNRICPEPSSSEQSLCGNDGVTYSSACHLRKATCLLGRSIGLAYEGKCIK) form the Kazal-like 2 domain. The Follistatin-like 3 domain maps to 244–268 (SCEDIQCGGGKKCLWDFKVGRGRCS). A Kazal-like 3 domain is found at 264-318 (RGRCSLCDELCPDSKSDEPVCASDNATYASECAMKEAACSSGVLLEVKHSGSCNS). Asn-288 carries an N-linked (GlcNAc...) asparagine glycan. The interval 315-344 (SCNSISEETEEEEEEEDQDYSFPISSTLEW) is disordered. The span at 321–333 (EETEEEEEEEDQD) shows a compositional bias: acidic residues.

Interacts with GDF11. Interacts with activin A/INHBA. Interacts with myostatin/MSTN.

It is found in the secreted. Its subcellular location is the nucleus. The protein resides in the nucleolus. Functionally, multifunctional regulatory protein whose primary function is to antagonize members of the transforming growth factor beta (TGF-beta) superfamily including activin, myostatin, GDF11 or bone morphogenetic proteins (BMPs). Mechanistically, binds to these ligands in the extracellular space, blocking their type II receptor-binding site to inhibit downstream signaling. Plays an essential role in muscle fiber formation and growth both by preventing the repressive effects of myostatin and through SMAD3/AKT/mTOR signaling independently of myostatin. Also promotes neural differentiation by antagonizing the action BMP4. Acts as a specific inhibitor of the biosynthesis and secretion of pituitary follicle stimulating hormone (FSH) by sequestering activin A/INHBA. On the other hand, translocates into the nucleus where it down-regulates rRNA synthesis and ribosome biogenesis to maintain cellular energy homeostasis by binding to rDNA. The chain is Follistatin from Rattus norvegicus (Rat).